The primary structure comprises 156 residues: MPRKGPIPRREVLPDPVYNSRLAARFVNRMMVDGKKGAAEKIFYKSLEVLQEKTGEDAIKAFEKAVDNVKPFVEVKSRRVGGATYQVPVEVRSDRQVSLAIRWLITYARARGEKGMVGRLSGELLDAFNNRGGAVKKKDDTHRMAEANKAFAHFRW.

It belongs to the universal ribosomal protein uS7 family. In terms of assembly, part of the 30S ribosomal subunit. Contacts proteins S9 and S11.

In terms of biological role, one of the primary rRNA binding proteins, it binds directly to 16S rRNA where it nucleates assembly of the head domain of the 30S subunit. Is located at the subunit interface close to the decoding center, probably blocks exit of the E-site tRNA. This chain is Small ribosomal subunit protein uS7, found in Oleidesulfovibrio alaskensis (strain ATCC BAA-1058 / DSM 17464 / G20) (Desulfovibrio alaskensis).